We begin with the raw amino-acid sequence, 90 residues long: uncharacterized protein (90 aa).

The N-terminal stretch at 1 to 20 (MAYKMLQVVLCSTLLIGALG) is a signal peptide.

This is an uncharacterized protein from Homo sapiens (Human).